The primary structure comprises 421 residues: Forkhead box protein fkh-4 (421 aa).

A DNA-binding region (fork-head) is located at residues 118–218; that stretch reads RPPISYVALC…SDADFDFFRK (101 aa).

The protein localises to the nucleus. Its function is as follows. Transcription factor. Regulates expression of a class of small RNAs, known as 21U-RNAs, perhaps acting redundantly with fkh-3 and fkh-5. This Caenorhabditis elegans protein is Forkhead box protein fkh-4.